Here is a 501-residue protein sequence, read N- to C-terminus: Sucrose transport protein SUT2 (501 aa).

At 1-31 (MPRRPSGGGGGAGPAAAAVRKVPLRKLLRAA) the chain is on the cytoplasmic side. A helical membrane pass occupies residues 32-52 (SVACGVQFGWALQLSLLTPYV). Topologically, residues 53–55 (QEL) are extracellular. The chain crosses the membrane as a helical span at residues 56–76 (GIPHAFASLVWLCGPLSGLLV). Residues 77–98 (QPLVGHLSDRIAPAASPLGRRR) are Cytoplasmic-facing. Residues 99 to 119 (PFIAAGAASIAAAVLTVGFSA) traverse the membrane as a helical segment. At 120–135 (DLGRIFGDSITPGSTR) the chain is on the extracellular side. Residues 136–156 (LGAIIVYLVGFWLLDVGNNAT) form a helical membrane-spanning segment. The Cytoplasmic portion of the chain corresponds to 157 to 176 (QGPCRAFLADLTENDPRRTR). A helical membrane pass occupies residues 177-197 (IANAYFSLFMALGNILGYATG). At 198 to 222 (AYSGWYKIFPFTVTPSCSISCANLK) the chain is on the extracellular side. A helical membrane pass occupies residues 223–243 (SAFLLDIIILVVTTCITVASV). Residues 244-278 (QEPQSLGSDEADHPSTEQEAFLWELFGSFRYFTLP) are Cytoplasmic-facing. Residues 279-299 (VWMVLIVTALTWIGWFPFILF) form a helical membrane-spanning segment. Residues 300–327 (DTDWMGREIYRGSPDDPSITQSYHDGVR) lie on the Extracellular side of the membrane. A helical membrane pass occupies residues 328–348 (MGSFGLMLNSVLLGFTSIVLE). Topologically, residues 349 to 356 (KLCRKWGA) are cytoplasmic. A helical membrane pass occupies residues 357–377 (GLVWGVSNILMALCFVAMLVI). Residues 378–394 (TYVAKNMDYPPSGVPPT) are Extracellular-facing. Residues 395–415 (GIVIASLVVFTILGAPLAITY) traverse the membrane as a helical segment. Over 416–433 (SIPYAMAASRVENLGLGQ) the chain is Cytoplasmic. Residues 434-454 (GLAMGILNLAIVIPQVIVSLG) form a helical membrane-spanning segment. Over 455–467 (SGPWDQLFGGGNA) the chain is Extracellular. The helical transmembrane segment at 468–488 (PAFAVAAAASFIGGLVAILGL) threads the bilayer. Over 489–501 (PRARIASRRRGHR) the chain is Cytoplasmic.

This sequence belongs to the glycoside-pentoside-hexuronide (GPH) cation symporter transporter (TC 2.A.2.4) family. In terms of assembly, homodimer. As to expression, expressed in source leaf blades.

The protein resides in the cell membrane. It participates in glycan biosynthesis; sucrose metabolism. Responsible for the transport of sucrose into the cell, with the concomitant uptake of protons (symport system). May also transport other glucosides. The sequence is that of Sucrose transport protein SUT2 (SUT2) from Oryza sativa subsp. indica (Rice).